Consider the following 82-residue polypeptide: Beta-neurotoxin Css9 (82 aa).

Residues 1–17 (MKLLMLIVALMIIGVQS) form the signal peptide. The region spanning 18-81 (KDGYPMDHKG…VWDRATNKCR (64 aa)) is the LCN-type CS-alpha/beta domain. Cystine bridges form between cysteine 28–cysteine 80, cysteine 32–cysteine 54, cysteine 39–cysteine 61, and cysteine 43–cysteine 63.

It belongs to the long (4 C-C) scorpion toxin superfamily. Sodium channel inhibitor family. Beta subfamily. In terms of tissue distribution, expressed by the venom gland.

Its subcellular location is the secreted. Its function is as follows. Beta toxins bind voltage-independently at site-4 of sodium channels (Nav) and shift the voltage of activation toward more negative potentials thereby affecting sodium channel activation and promoting spontaneous and repetitive firing. This toxin compete with high affinity with 125I-Css4 bound on rat brain synaptosome and may bind with high affinity to Nav1.1/SCN1A, Nav1.2/SCN2A and Nav1.6/SCN8A. This chain is Beta-neurotoxin Css9, found in Centruroides suffusus (Durango bark scorpion).